We begin with the raw amino-acid sequence, 248 residues long: MYPSPVRHPGLNLNPQNYVPGPPQYSDFASYHHVPGINNDPHHGQPAAAWGSPYTPAKEDWHSYGTAAASAATNPGQFGFSPPDFNPMQPHAGSGLLPPAISSSVPQLSPNAQRRTPYEWMRRSIPSTSSSGKTRTKDKYRVVYTDHQRLELEKEFHYSRYITIRRKAELAAALGLTERQVKIWFQNRRAKERKVNKKKLQQQSQPTSTTTPTPPAVGTPGPMGTLCSGSAPSLVSSSPLTIKEEFMP.

Positions 137-196 (KDKYRVVYTDHQRLELEKEFHYSRYITIRRKAELAAALGLTERQVKIWFQNRRAKERKVN) form a DNA-binding region, homeobox. Residues 192–248 (ERKVNKKKLQQQSQPTSTTTPTPPAVGTPGPMGTLCSGSAPSLVSSSPLTIKEEFMP) form a disordered region. Composition is skewed to low complexity over residues 201-211 (QQQSQPTSTTT) and 228-240 (SGSA…SSPL).

This sequence belongs to the Caudal homeobox family.

The protein localises to the nucleus. May play an important role during the early steps of organogenesis. The polypeptide is Homeobox protein CHOX-CAD (CHOX-CAD1) (Gallus gallus (Chicken)).